The sequence spans 459 residues: Cyclooctat-9-en-7-ol 5-monooxygenase (459 aa).

The tract at residues 1-27 is disordered; that stretch reads MRERGPVTPAKSSAPPERPWTTGTAPG. Cys408 serves as a coordination point for heme.

This sequence belongs to the cytochrome P450 family. Heme serves as cofactor.

It carries out the reaction cyclooctat-9-en-7-ol + AH2 + O2 = cyclooctat-9-ene-5,7-diol + A + H2O. Involved in the biosynthesis of cyclooctatin, a potent inhibitor of lysophospholipase. Catalyzes the stereospecific hydroxylation of cyclooctat-9-en-7-ol to form cyclooctat-9-ene-5,7-diol. The sequence is that of Cyclooctat-9-en-7-ol 5-monooxygenase from Streptomyces melanosporofaciens.